Consider the following 339-residue polypeptide: Anthranilate phosphoribosyltransferase (339 aa).

Residues glycine 79, 82–83, serine 87, 89–92, 107–115, and serine 119 contribute to the 5-phospho-alpha-D-ribose 1-diphosphate site; these read GD, NIST, and KHGNRSISS. Glycine 79 contacts anthranilate. Serine 91 provides a ligand contact to Mg(2+). Asparagine 110 contacts anthranilate. Arginine 165 serves as a coordination point for anthranilate. Mg(2+) is bound by residues aspartate 224 and glutamate 225.

The protein belongs to the anthranilate phosphoribosyltransferase family. In terms of assembly, homodimer. Requires Mg(2+) as cofactor.

It catalyses the reaction N-(5-phospho-beta-D-ribosyl)anthranilate + diphosphate = 5-phospho-alpha-D-ribose 1-diphosphate + anthranilate. Its pathway is amino-acid biosynthesis; L-tryptophan biosynthesis; L-tryptophan from chorismate: step 2/5. Catalyzes the transfer of the phosphoribosyl group of 5-phosphorylribose-1-pyrophosphate (PRPP) to anthranilate to yield N-(5'-phosphoribosyl)-anthranilate (PRA). This is Anthranilate phosphoribosyltransferase from Listeria welshimeri serovar 6b (strain ATCC 35897 / DSM 20650 / CCUG 15529 / CIP 8149 / NCTC 11857 / SLCC 5334 / V8).